A 1223-amino-acid chain; its full sequence is Glycerophosphocholine phosphodiesterase GDE1 (1223 aa).

The region spanning 1-213 is the SPX domain; it reads MKFGKTFANH…GTNQQMSTMK (213 aa). Over residues 43–59 the composition is skewed to basic and acidic residues; that stretch reads HNKNSYDEGRPPTKMRD. Residues 43-64 are disordered; the sequence is HNKNSYDEGRPPTKMRDSSNSA. ANK repeat units follow at residues 427–456, 472–502, 504–533, 538–567, 572–601, and 605–634; these read YKRT…EWNI, ESLT…NVKL, SSSL…DINY, LHET…DLEI, FGWT…NFDI, and GGWT…LVTH. Ser-653 carries the phosphoserine modification. Positions 872–1217 constitute a GP-PDE domain; it reads TRVIGHRGLG…DSVLAIRRGL (346 aa). The a divalent metal cation site is built by Glu-911, Asp-913, and His-926. Ser-983 bears the Phosphoserine mark.

Belongs to the GDE1 family. A divalent metal cation is required as a cofactor.

It is found in the cytoplasm. It catalyses the reaction sn-glycerol 3-phosphocholine + H2O = sn-glycerol 3-phosphate + choline + H(+). The enzyme catalyses sn-glycero-3-phospho-1D-myo-inositol + H2O = myo-inositol + sn-glycerol 3-phosphate + H(+). In terms of biological role, glycerophosphocholine glycerophosphodiesterase responsible for the hydrolysis of intracellular glycerophosphocholine into glycerol-phosphate and choline. The choline is used for phosphatidyl-choline synthesis. Required for utilization of glycerophosphocholine as phosphate source. May also use glycerophosphoinositol as substrate in vivo. The sequence is that of Glycerophosphocholine phosphodiesterase GDE1 from Saccharomyces cerevisiae (strain ATCC 204508 / S288c) (Baker's yeast).